The following is a 115-amino-acid chain: Parathyroid hormone (115 aa).

The signal sequence occupies residues 1 to 25; it reads MMSAKNMVKVMIVMFAIFLLAKSDG. A propeptide spanning residues 26 to 31 is cleaved from the precursor; sequence KPVRKR. The interval 51 to 69 is important for receptor binding; the sequence is RVEWLRKKLQDVHNFIALG. Residues 73–115 form a disordered region; the sequence is FHRDGGSQRPRKKEDNVLIESHQKSLGEADKADVDVLSKTKSQ.

This sequence belongs to the parathyroid hormone family. Interacts with PTH1R (via N-terminal extracellular domain).

Its subcellular location is the secreted. Functionally, parathyroid hormone elevates calcium level by dissolving the salts in bone and preventing their renal excretion. Acts by binding to its receptor, PTH1R, activating G protein-coupled receptor signaling. Stimulates [1-14C]-2-deoxy-D-glucose (2DG) transport and glycogen synthesis in osteoblastic cells. This is Parathyroid hormone (PTH) from Equus caballus (Horse).